The following is a 934-amino-acid chain: Serine/threonine-protein kinase PknD (934 aa).

The 293-residue stretch at 4-296 folds into the Protein kinase domain; the sequence is YELIRLIGKG…ELRQALQPYL (293 aa). ATP-binding positions include 10–18 and K33; that span reads IGKGGMGEV. D138 acts as the Proton acceptor in catalysis.

It belongs to the protein kinase superfamily. Ser/Thr protein kinase family. As to quaternary structure, interacts with Pkn1. Post-translationally, autophosphorylated on serine and threonine residues.

The enzyme catalyses L-seryl-[protein] + ATP = O-phospho-L-seryl-[protein] + ADP + H(+). The catalysed reaction is L-threonyl-[protein] + ATP = O-phospho-L-threonyl-[protein] + ADP + H(+). Functionally, together with the serine/threonine kinase Pkn1, may play a role in the specific interactions with host proteins during intracellular growth. Autophosphorylates and also phosphorylates Pkn1. The polypeptide is Serine/threonine-protein kinase PknD (Chlamydia trachomatis serovar D (strain ATCC VR-885 / DSM 19411 / UW-3/Cx)).